The primary structure comprises 89 residues: Small ribosomal subunit protein uS15 (89 aa).

Belongs to the universal ribosomal protein uS15 family. As to quaternary structure, part of the 30S ribosomal subunit. Forms a bridge to the 50S subunit in the 70S ribosome, contacting the 23S rRNA.

In terms of biological role, one of the primary rRNA binding proteins, it binds directly to 16S rRNA where it helps nucleate assembly of the platform of the 30S subunit by binding and bridging several RNA helices of the 16S rRNA. Forms an intersubunit bridge (bridge B4) with the 23S rRNA of the 50S subunit in the ribosome. The chain is Small ribosomal subunit protein uS15 from Ralstonia nicotianae (strain ATCC BAA-1114 / GMI1000) (Ralstonia solanacearum).